Reading from the N-terminus, the 141-residue chain is Large-conductance mechanosensitive channel (141 aa).

Helical transmembrane passes span 21 to 41 (VGVIIGGAFGKIVDSIVGDLI) and 85 to 105 (GSFLTILVNFIILAFIIFMMV).

The protein belongs to the MscL family. In terms of assembly, homopentamer.

It localises to the cell inner membrane. Functionally, channel that opens in response to stretch forces in the membrane lipid bilayer. May participate in the regulation of osmotic pressure changes within the cell. This is Large-conductance mechanosensitive channel from Dechloromonas aromatica (strain RCB).